A 125-amino-acid polypeptide reads, in one-letter code: Somatostatin-2 (125 aa).

Residues 1 to 24 (MQCIRCPAILALLALVLCGPSVSS) form the signal peptide. At Q25 the chain carries Pyrrolidone carboxylic acid. The propeptide occupies 25 to 97 (QLDREQSDNQ…ATGGRMNLER (73 aa)). The segment at 82–107 (AEDASMATGGRMNLERSVDSTNNLPP) is disordered. C114 and C125 form a disulfide bridge. K120 carries the 5-hydroxylysine modification.

The protein belongs to the somatostatin family.

Its subcellular location is the secreted. Somatostatin inhibits the release of somatotropin. This chain is Somatostatin-2 (sst2), found in Lophius americanus (American angler).